The following is a 288-amino-acid chain: Elongation factor Ts (288 aa).

The interval 79–82 (TDFV) is involved in Mg(2+) ion dislocation from EF-Tu.

Belongs to the EF-Ts family.

It is found in the cytoplasm. Functionally, associates with the EF-Tu.GDP complex and induces the exchange of GDP to GTP. It remains bound to the aminoacyl-tRNA.EF-Tu.GTP complex up to the GTP hydrolysis stage on the ribosome. In Ehrlichia ruminantium (strain Welgevonden), this protein is Elongation factor Ts.